Reading from the N-terminus, the 347-residue chain is Protein RecA (347 aa).

66–73 (GPESSGKT) contributes to the ATP binding site.

This sequence belongs to the RecA family.

It localises to the cytoplasm. Its function is as follows. Can catalyze the hydrolysis of ATP in the presence of single-stranded DNA, the ATP-dependent uptake of single-stranded DNA by duplex DNA, and the ATP-dependent hybridization of homologous single-stranded DNAs. It interacts with LexA causing its activation and leading to its autocatalytic cleavage. This chain is Protein RecA, found in Allochromatium vinosum (Chromatium vinosum).